A 749-amino-acid chain; its full sequence is Cytosolic phospholipase A2 (749 aa).

A C2 domain is found at 1–124 (MASIDPYQHI…GEKKQVPFTF (124 aa)). A phospholipid binding region spans residues 1–178 (MASIDPYQHI…LRKLLGPEKT (178 aa)). Residues Asp40, Thr41, Asp43, Asn65, Asp93, Ala94, and Asn95 each contribute to the Ca(2+) site. The region spanning 138–740 (VCSSTDLRFS…NDVEARKLLH (603 aa)) is the PLA2c domain. Ser229 functions as the Nucleophile in the catalytic mechanism. The tract at residues 417–458 (MEEEIENLKPKHILGNDSSDSDDEMQEPKGTENSKAEEEYQR) is disordered. A compositionally biased stretch (basic and acidic residues) spans 442–457 (QEPKGTENSKAEEEYQ). Asp549 (proton acceptor) is an active-site residue.

It is found in the cytoplasm. It localises to the cytoplasmic vesicle. It catalyses the reaction a 1,2-diacyl-sn-glycero-3-phosphocholine + H2O = a 1-acyl-sn-glycero-3-phosphocholine + a fatty acid + H(+). It carries out the reaction a 1-acyl-sn-glycero-3-phosphocholine + H2O = sn-glycerol 3-phosphocholine + a fatty acid + H(+). Stimulated by agonists such as ATP, EGF, thrombin and bradykinin as well as by cytosolic Ca(2+). Its function is as follows. Selectively hydrolyzes arachidonyl phospholipids in the sn-2 position releasing arachidonic acid. Together with its lysophospholipid activity, it is implicated in the initiation of the inflammatory response. The sequence is that of Cytosolic phospholipase A2 (pla2g4a) from Xenopus tropicalis (Western clawed frog).